The following is a 96-amino-acid chain: Myticin-A (96 aa).

Positions 1 to 20 (MKATILLAVLVAVFVAGTEA) are cleaved as a signal peptide. A propeptide spans 61-96 (VNNPFRVNQVAKSINDLDYTPIMKSMENLDNGMDML) (removed in mature form).

In terms of processing, contains four disulfide bonds. As to expression, hemocytes.

It is found in the secreted. Functionally, bacteriolytic activity against Gram-positive bacteria M.luteus, B.megaterium and A.viridans. The polypeptide is Myticin-A (Mytilus galloprovincialis (Mediterranean mussel)).